A 43-amino-acid chain; its full sequence is Defensin-B (43 aa).

3 disulfide bridges follow: Cys-3-Cys-34, Cys-20-Cys-39, and Cys-24-Cys-41.

It localises to the secreted. Functionally, antibacterial protein. Strong activity against the Gram-positive bacteria M.luteus, B.megaterium and S.aureus. Reduced activity against Gram-positive bacterium B.subtilis and weak activity against Gram-negative bacterium X.japonicus. No detectable activity against the Gram-negative bacteria E.asbriae, E.coli, P.aeruginosa and S.marcescens. The chain is Defensin-B from Anomala cuprea (Cupreous chafer beetle).